The primary structure comprises 242 residues: 7-cyano-7-deazaguanine synthase (242 aa).

An ATP-binding site is contributed by 12 to 22; sequence FSGGQDSTTCL. The Zn(2+) site is built by Cys-200, Cys-215, Cys-218, and Cys-221.

The protein belongs to the QueC family. It depends on Zn(2+) as a cofactor.

It catalyses the reaction 7-carboxy-7-deazaguanine + NH4(+) + ATP = 7-cyano-7-deazaguanine + ADP + phosphate + H2O + H(+). The protein operates within purine metabolism; 7-cyano-7-deazaguanine biosynthesis. In terms of biological role, catalyzes the ATP-dependent conversion of 7-carboxy-7-deazaguanine (CDG) to 7-cyano-7-deazaguanine (preQ(0)). The sequence is that of 7-cyano-7-deazaguanine synthase from Nitratidesulfovibrio vulgaris (strain ATCC 29579 / DSM 644 / CCUG 34227 / NCIMB 8303 / VKM B-1760 / Hildenborough) (Desulfovibrio vulgaris).